The chain runs to 139 residues: GPI-anchored protein 53 (139 aa).

Positions 1 to 17 (MKFQLLTLVSIATTTLA) are cleaved as a signal peptide. Composition is skewed to low complexity over residues 57-69 (TITSSSSTTTTTT) and 77-101 (TSTTSASSTTTTSTKSNSTSPSSSS). The interval 57–115 (TITSSSSTTTTTTAKKDKKTTSTTSASSTTTTSTKSNSTSPSSSSSKKHKSETASITKT) is disordered. A glycan (N-linked (GlcNAc...) asparagine) is linked at Asn-93. The GPI-anchor amidated glycine moiety is linked to residue Gly-116. Positions 117-139 (GADSVAAAAAVGGPILAALALLL) are cleaved as a propeptide — removed in mature form.

The protein resides in the cell membrane. In Candida albicans (strain SC5314 / ATCC MYA-2876) (Yeast), this protein is GPI-anchored protein 53 (PGA53).